The chain runs to 501 residues: Lysine--tRNA ligase (501 aa).

Residues glutamate 411 and glutamate 418 each coordinate Mg(2+).

Belongs to the class-II aminoacyl-tRNA synthetase family. As to quaternary structure, homodimer. It depends on Mg(2+) as a cofactor.

The protein localises to the cytoplasm. The catalysed reaction is tRNA(Lys) + L-lysine + ATP = L-lysyl-tRNA(Lys) + AMP + diphosphate. This Shewanella woodyi (strain ATCC 51908 / MS32) protein is Lysine--tRNA ligase.